The sequence spans 231 residues: Protein fmp52-2, mitochondrial (231 aa).

Residues 1-46 (MTMTTAAVFGCTGAVGSQILATLLAIDTFPSVKTISRRLPNVQSPK) constitute a mitochondrion transit peptide.

It belongs to the FMP52 family.

Its subcellular location is the mitochondrion outer membrane. The protein is Protein fmp52-2, mitochondrial (fmp522) of Neosartorya fischeri (strain ATCC 1020 / DSM 3700 / CBS 544.65 / FGSC A1164 / JCM 1740 / NRRL 181 / WB 181) (Aspergillus fischerianus).